The primary structure comprises 765 residues: Carboxysome assembly protein CsoS2 (765 aa).

Residues methionine 1–lysine 22 are compositionally biased toward basic and acidic residues. Disordered regions lie at residues methionine 1 to valine 107 and arginine 165 to glycine 229. The interval methionine 1 to glutamine 215 is N-terminal domain. Residues arginine 7–lysine 22 form an N-repeat 1 repeat. Polar residues predominate over residues serine 38–proline 63. Positions serine 77–lysine 87 are enriched in basic and acidic residues. N-repeat repeat units follow at residues lysine 79–lysine 94, arginine 158–lysine 173, and arginine 196–serine 211. The span at arginine 187–serine 207 shows a compositional bias: basic and acidic residues. Positions glycine 216 to aspartate 586 are middle region. M-repeat repeat units lie at residues lysine 240 to cysteine 289, arginine 300 to cysteine 349, lysine 358 to tyrosine 397, lysine 411 to cysteine 460, lysine 470 to cysteine 519, and arginine 530 to cysteine 580. 2 disordered regions span residues threonine 306–proline 328 and glycine 367–glycine 413. The tract at residues tyrosine 589 to asparagine 734 is C-terminal domain. 2 C-repeat repeats span residues serine 604–glutamine 648 and lysine 677–serine 711. 2 disordered regions span residues glutamate 611 to aspartate 637 and asparagine 656 to glycine 765. Over residues aspartate 730–aspartate 741 the composition is skewed to basic and acidic residues. The interval aspartate 735–glycine 765 is C-terminal peptide.

The protein belongs to the CsoS2 family. As to quaternary structure, probably interacts with the carboxysome major shell protein CsoS1 via the N-terminal domain. A CsoS1-CsoS1D-CsoS2 complex can be isolated following expression in E.coli. Interacts via its N-terminal repeats with RuBisCO. In terms of processing, unlike H.neapolitanus and predictions for P.marinus strain MIT 9313, this protein is not thought to have ribosomal frameshifting.

The protein resides in the carboxysome. Required for alpha-carboxysome (Cb) assembly, mediates interaction between RuBisCO and the Cb shell. The protein is probably highly flexible. The C-terminal repeats act as the encapsulation signal to target proteins to the Cb; they are necessary and sufficient to target both CsoS2 and foreign proteins to the Cb. The N-terminal repeats of this protein bind simultaneously to both subunits of RuBisCO. Probably also interacts with the major shell proteins (CsoS1); that interaction would increase the local concentration of CsoS2 so that it can condense RuBisCO and full carboxysomes can be formed. There are estimated to be 163 CsoS2 proteins per carboxysome; unlike H.neapolitanus only 1 form is seen. This is Carboxysome assembly protein CsoS2 from Prochlorococcus marinus subsp. pastoris (strain CCMP1986 / NIES-2087 / MED4).